Here is a 266-residue protein sequence, read N- to C-terminus: Glutamate racemase (266 aa).

Substrate is bound by residues 9–10 and 41–42; these read DS and YG. The active-site Proton donor/acceptor is the cysteine 72. 73–74 is a binding site for substrate; sequence NT. The Proton donor/acceptor role is filled by cysteine 184. 185–186 contributes to the substrate binding site; it reads TH.

This sequence belongs to the aspartate/glutamate racemases family.

The catalysed reaction is L-glutamate = D-glutamate. It functions in the pathway cell wall biogenesis; peptidoglycan biosynthesis. In terms of biological role, provides the (R)-glutamate required for cell wall biosynthesis. This chain is Glutamate racemase, found in Staphylococcus haemolyticus.